A 359-amino-acid polypeptide reads, in one-letter code: MRSIRKRWTICTISLLLIFYKTKEIARTEEHQETQLIGDGELSLSRSLVNSSDKIIRKAGSSIFQHNVEGWKINSSLVLEIRKNILRFLDAERDVSVVKSSFKPGDVIHYVLDRRRTLNISHDLHSLLPEVSPMKNRRFKTCAVVGNSGILLDSECGKEIDSHNFVIRCNLAPVVEFAADVGTKSDFITMNPSVVQRAFGGFRNESDREKFVHRLSMLNDSVLWIPAFMVKGGEKHVEWVNALILKNKLKVRTAYPSLRLIHAVRGYWLTNKVPIKRPSTGLLMYTLATRFCDEIHLYGFWPFPKDLNGKAVKYHYYDDLKYRYFSNASPHRMPLEFKTLNVLHNRGALKLTTGKCVKQ.

The Cytoplasmic portion of the chain corresponds to 1–7; the sequence is MRSIRKR. The helical; Signal-anchor for type II membrane protein transmembrane segment at 8–20 threads the bilayer; the sequence is WTICTISLLLIFY. The Lumenal portion of the chain corresponds to 21–359; the sequence is KTKEIARTEE…KLTTGKCVKQ (339 aa). 3 N-linked (GlcNAc...) asparagine glycosylation sites follow: Asn-50, Asn-74, and Asn-119. 2 cysteine pairs are disulfide-bonded: Cys-142-Cys-292 and Cys-156-Cys-356. 2 residues coordinate CMP-N-acetyl-beta-neuraminate: Asn-147 and Asn-170. Residues Asn-204 and Asn-219 are each glycosylated (N-linked (GlcNAc...) asparagine). CMP-N-acetyl-beta-neuraminate-binding residues include Ser-279, Thr-280, Gly-281, and Trp-301. His-331 (proton donor/acceptor) is an active-site residue.

This sequence belongs to the glycosyltransferase 29 family. In terms of processing, autopolysialylated.

Its subcellular location is the golgi apparatus membrane. The protein localises to the secreted. It carries out the reaction [N-acetyl-alpha-D-neuraminosyl-(2-&gt;8)](n) + CMP-N-acetyl-beta-neuraminate = [N-acetyl-alpha-D-neuraminosyl-(2-&gt;8)](n+1) + CMP + H(+). In terms of biological role, catalyzes the transfer of a sialic acid from a CMP-linked sialic acid donor onto a terminal alpha-2,3-, alpha-2,6-, or alpha-2,8-linked sialic acid of an N-linked glycan protein acceptor through alpha-2,8-linkages. Therefore, participates in polysialic acid synthesis on various sialylated N-acetyllactosaminyl oligosaccharides, including NCAM1 N-glycans, FETUB N-glycans and AHSG. It is noteworthy that alpha-2,3-linked sialic acid is apparently a better acceptor than alpha-2,6-linked sialic acid. In Pan troglodytes (Chimpanzee), this protein is CMP-N-acetylneuraminate-poly-alpha-2,8-sialyltransferase (ST8SIA4).